The sequence spans 388 residues: Alanine racemase 2 (388 aa).

K39 acts as the Proton acceptor; specific for D-alanine in catalysis. K39 carries the post-translational modification N6-(pyridoxal phosphate)lysine. R137 serves as a coordination point for substrate. Catalysis depends on Y267, which acts as the Proton acceptor; specific for L-alanine. M315 provides a ligand contact to substrate.

This sequence belongs to the alanine racemase family. Pyridoxal 5'-phosphate serves as cofactor.

It carries out the reaction L-alanine = D-alanine. Its pathway is amino-acid biosynthesis; D-alanine biosynthesis; D-alanine from L-alanine: step 1/1. Functionally, catalyzes the interconversion of L-alanine and D-alanine. May also act on other amino acids. The polypeptide is Alanine racemase 2 (alr2) (Caldanaerobacter subterraneus subsp. tengcongensis (strain DSM 15242 / JCM 11007 / NBRC 100824 / MB4) (Thermoanaerobacter tengcongensis)).